Consider the following 671-residue polypeptide: DNA ligase (671 aa).

NAD(+) contacts are provided by residues 32-36, 81-82, and Glu-113; these read DAEYD and SL. Lys-115 (N6-AMP-lysine intermediate) is an active-site residue. Positions 136, 173, 290, and 314 each coordinate NAD(+). Zn(2+)-binding residues include Cys-408, Cys-411, Cys-426, and Cys-432. Residues 593-671 enclose the BRCT domain; the sequence is EIDSPFAGKT…ETEMLHLLGS (79 aa).

This sequence belongs to the NAD-dependent DNA ligase family. LigA subfamily. Mg(2+) is required as a cofactor. Mn(2+) serves as cofactor.

It catalyses the reaction NAD(+) + (deoxyribonucleotide)n-3'-hydroxyl + 5'-phospho-(deoxyribonucleotide)m = (deoxyribonucleotide)n+m + AMP + beta-nicotinamide D-nucleotide.. In terms of biological role, DNA ligase that catalyzes the formation of phosphodiester linkages between 5'-phosphoryl and 3'-hydroxyl groups in double-stranded DNA using NAD as a coenzyme and as the energy source for the reaction. It is essential for DNA replication and repair of damaged DNA. In Escherichia coli O6:K15:H31 (strain 536 / UPEC), this protein is DNA ligase.